The following is a 428-amino-acid chain: D-amino acid dehydrogenase (428 aa).

Residue 3-17 participates in FAD binding; it reads VVILGSGVVGVASAY.

Belongs to the DadA oxidoreductase family. Requires FAD as cofactor.

It catalyses the reaction a D-alpha-amino acid + A + H2O = a 2-oxocarboxylate + AH2 + NH4(+). The protein operates within amino-acid degradation; D-alanine degradation; NH(3) and pyruvate from D-alanine: step 1/1. Oxidative deamination of D-amino acids. This Burkholderia cenocepacia (strain ATCC BAA-245 / DSM 16553 / LMG 16656 / NCTC 13227 / J2315 / CF5610) (Burkholderia cepacia (strain J2315)) protein is D-amino acid dehydrogenase.